Consider the following 569-residue polypeptide: Thiol:disulfide interchange protein DsbD (569 aa).

The first 19 residues, 1-19, serve as a signal peptide directing secretion; that stretch reads MAQRILTLILLLCSTSAFA. Disulfide bonds link C122/C128 and C187/C309. Helical transmembrane passes span 168-188, 213-233, 248-268, 301-321, 328-348, 362-382, and 391-411; these read LPFSALWALLIGIGIAFTPCV, LLTFIYVQGMALTYTALGLVV, YVLIGLALVFTLLALSMFGLF, IAGLICSPCTTAPLSAILLYI, WLGGGTLYLYALGMGLPLILI, WMEHVKTAFGFVILALPVFLL, and GLRLWSLLGVAFFGWAFITSL. The Thioredoxin domain occupies 430–569; sequence LVSVRPLQDW…FSAHLRDRQP (140 aa). C484 and C487 form a disulfide bridge.

The protein belongs to the thioredoxin family. DsbD subfamily.

The protein localises to the cell inner membrane. The catalysed reaction is [protein]-dithiol + NAD(+) = [protein]-disulfide + NADH + H(+). It carries out the reaction [protein]-dithiol + NADP(+) = [protein]-disulfide + NADPH + H(+). Required to facilitate the formation of correct disulfide bonds in some periplasmic proteins and for the assembly of the periplasmic c-type cytochromes. Acts by transferring electrons from cytoplasmic thioredoxin to the periplasm. This transfer involves a cascade of disulfide bond formation and reduction steps. The protein is Thiol:disulfide interchange protein DsbD of Citrobacter koseri (strain ATCC BAA-895 / CDC 4225-83 / SGSC4696).